The sequence spans 223 residues: Small ribosomal subunit protein uS3 (223 aa).

The KH type-2 domain occupies 39 to 107 (VRSYLAKKLS…PVHINIQEIR (69 aa)).

It belongs to the universal ribosomal protein uS3 family. Part of the 30S ribosomal subunit. Forms a tight complex with proteins S10 and S14.

Binds the lower part of the 30S subunit head. Binds mRNA in the 70S ribosome, positioning it for translation. This chain is Small ribosomal subunit protein uS3, found in Nitrosococcus oceani (strain ATCC 19707 / BCRC 17464 / JCM 30415 / NCIMB 11848 / C-107).